The chain runs to 515 residues: Cytochrome P450 monooxygenase mfmA (515 aa).

A helical transmembrane segment spans residues 3-23 (KISIIPIVGVALSLAIILQLG). Position 453 (C453) interacts with heme.

The protein belongs to the cytochrome P450 family. It depends on heme as a cofactor.

The protein resides in the membrane. It functions in the pathway secondary metabolite biosynthesis; terpenoid biosynthesis. Functionally, cytochrome P450 monooxygenase; part of the gene cluster that mediates the biosynthesis of the phthalide-terpenoid hybrid 11'-O-desmethylfendlerol. Within the pathway, mfma and mfmC act together to convert 3,5-dimethylorsellinic acid (DMOA) into the phthalide 5,7-dihydroxy-4-(hydroxymethyl)-6-methylphthalide. MfmA performs especially an hydroxylation at C-9. The biosynthesis of 11'-O-desmethylfendlerol begins with the NR-PKS mfmB that forms 3,5-dimethylorsellinic acid (DMOA), which is then transformed into the phthalide 5,7-dihydroxy-4-(hydroxymethyl)-6-methylphthalide by the cytochrome P450 monooxygenase mfmA and the hydrolase mfmC. Subsequently, the methyltransferase mfmE catalyzes 7-O-methylation to yield 5-hydroxy-4-(hydroxymethyl)-7-methoxy-6-methylphthalide, which undergoes C-3 hydroxylation by the cytochrome P450 monooxygenase mfmF. The resultant cyclopolic acid (2,5-dihydroxy-4-(hydroxymethyl)-7-methoxy-6-methylphthalide) is then farnesylated by the DMATS-type prenyltransferase mfmD to afford 5-O-farnesylcyclopolic acid. Finally, the Pyr4-family terpene cyclase mfmH cyclizes the farnesyl moiety of 5-O-farnesylcyclopolic acid into a drimane-like structure, thus completing the biosynthesis of 11'-O-desmethylfendlerol. This chain is Cytochrome P450 monooxygenase mfmA, found in Annulohypoxylon moriforme (Filamentous fungus).